The sequence spans 253 residues: Lys-63-specific deubiquitinase BRCC36 (253 aa).

One can recognise an MPN domain in the interval 9-145 (VELQTDVYMV…KEHEIFLNCF (137 aa)). Histidine 94, histidine 96, and aspartate 107 together coordinate Zn(2+). Residues 94 to 107 (HSHPHITVCPSHVD) carry the JAMM motif motif. Residues 227–249 (EKRIALNKLRATHLQRQLQELQK) are a coiled coil.

This sequence belongs to the peptidase M67A family. BRCC36 subfamily. In terms of assembly, component of the BRISC complex, at least composed of ABRAXAS2, BRCC3/BRCC36, BABAM2 and BABAM1/NBA1. Within the complex, interacts directly with ABRAXAS2. The heterodimer with ABRAXAS2 assembles into a heterotetramer. The BRISC complex binds polyubiquitin. It depends on Zn(2+) as a cofactor.

It is found in the cytoplasm. Its subcellular location is the nucleus. It localises to the cytoskeleton. The protein localises to the spindle pole. Functionally, metalloprotease that specifically cleaves 'Lys-63'-linked polyubiquitin chains, leaving the last ubiquitin chain attached to its substrates. Catalytic subunit of the BRISC complex; does not have activity by itself, but needs to be associated into a heterotetramer with ABRAXAS2 for minimal in vitro activity. Plays a role in regulating the onset of apoptosis via its role in modulating 'Lys-63'-linked ubiquitination of target proteins. Required for normal mitotic spindle assembly and microtubule attachment to kinetochores via its role in deubiquitinating spindle assembly factors. This Camponotus floridanus (Florida carpenter ant) protein is Lys-63-specific deubiquitinase BRCC36.